A 46-amino-acid polypeptide reads, in one-letter code: Large ribosomal subunit protein bL34c (46 aa).

Residues 1-46 (MSKRTLEGSHRKKVRKSGFLSRSQSPTGRRILKARRKKGRKMLVKY) form a disordered region. Basic residues predominate over residues 30-46 (RILKARRKKGRKMLVKY).

Belongs to the bacterial ribosomal protein bL34 family.

It is found in the plastid. The protein localises to the cyanelle. The chain is Large ribosomal subunit protein bL34c (rpl34) from Cyanophora paradoxa.